A 1027-amino-acid polypeptide reads, in one-letter code: Protein translocase subunit SecA (1027 aa).

Residues Q143, 161–165, and D661 contribute to the ATP site; that span reads GEGKT. Residues 981-1027 form a disordered region; it reads EESGTSNADNAGDNGPQTVIAEKKPGRNDLCPCGSGKKYKNCHGQQP. 4 residues coordinate Zn(2+): C1011, C1013, C1022, and H1023.

This sequence belongs to the SecA family. As to quaternary structure, monomer and homodimer. Part of the essential Sec protein translocation apparatus which comprises SecA, SecYEG and auxiliary proteins SecDF. Other proteins may also be involved. The cofactor is Zn(2+).

It localises to the cell inner membrane. It is found in the cytoplasm. It carries out the reaction ATP + H2O + cellular proteinSide 1 = ADP + phosphate + cellular proteinSide 2.. Part of the Sec protein translocase complex. Interacts with the SecYEG preprotein conducting channel. Has a central role in coupling the hydrolysis of ATP to the transfer of proteins into and across the cell membrane, serving as an ATP-driven molecular motor driving the stepwise translocation of polypeptide chains across the membrane. The chain is Protein translocase subunit SecA from Chlorobium limicola (strain DSM 245 / NBRC 103803 / 6330).